The following is a 67-amino-acid chain: Large ribosomal subunit protein bL31 (67 aa).

Belongs to the bacterial ribosomal protein bL31 family. Type A subfamily. In terms of assembly, part of the 50S ribosomal subunit.

In terms of biological role, binds the 23S rRNA. This Finegoldia magna (strain ATCC 29328 / DSM 20472 / WAL 2508) (Peptostreptococcus magnus) protein is Large ribosomal subunit protein bL31.